Consider the following 238-residue polypeptide: Ubiquinone biosynthesis O-methyltransferase (238 aa).

Arginine 40, glycine 59, aspartate 81, and methionine 126 together coordinate S-adenosyl-L-methionine.

Belongs to the methyltransferase superfamily. UbiG/COQ3 family.

It carries out the reaction a 3-demethylubiquinol + S-adenosyl-L-methionine = a ubiquinol + S-adenosyl-L-homocysteine + H(+). The enzyme catalyses a 3-(all-trans-polyprenyl)benzene-1,2-diol + S-adenosyl-L-methionine = a 2-methoxy-6-(all-trans-polyprenyl)phenol + S-adenosyl-L-homocysteine + H(+). It functions in the pathway cofactor biosynthesis; ubiquinone biosynthesis. Its function is as follows. O-methyltransferase that catalyzes the 2 O-methylation steps in the ubiquinone biosynthetic pathway. The sequence is that of Ubiquinone biosynthesis O-methyltransferase from Neisseria meningitidis serogroup C (strain 053442).